A 93-amino-acid polypeptide reads, in one-letter code: Small ribosomal subunit protein uS19 (93 aa).

The protein belongs to the universal ribosomal protein uS19 family.

Protein S19 forms a complex with S13 that binds strongly to the 16S ribosomal RNA. The chain is Small ribosomal subunit protein uS19 from Leptospira interrogans serogroup Icterohaemorrhagiae serovar copenhageni (strain Fiocruz L1-130).